We begin with the raw amino-acid sequence, 271 residues long: Ribosomal RNA small subunit methyltransferase A (271 aa).

Asparagine 18, leucine 20, glycine 45, glutamate 66, aspartate 91, and asparagine 112 together coordinate S-adenosyl-L-methionine.

Belongs to the class I-like SAM-binding methyltransferase superfamily. rRNA adenine N(6)-methyltransferase family. RsmA subfamily.

It localises to the cytoplasm. It carries out the reaction adenosine(1518)/adenosine(1519) in 16S rRNA + 4 S-adenosyl-L-methionine = N(6)-dimethyladenosine(1518)/N(6)-dimethyladenosine(1519) in 16S rRNA + 4 S-adenosyl-L-homocysteine + 4 H(+). Its function is as follows. Specifically dimethylates two adjacent adenosines (A1518 and A1519) in the loop of a conserved hairpin near the 3'-end of 16S rRNA in the 30S particle. May play a critical role in biogenesis of 30S subunits. This Vibrio cholerae serotype O1 (strain ATCC 39315 / El Tor Inaba N16961) protein is Ribosomal RNA small subunit methyltransferase A.